A 550-amino-acid chain; its full sequence is Glycosyltransferase-like protein gnt12 (550 aa).

The segment at 1–29 is disordered; sequence MSYLPLYNNNNNINNNNNNNNNRINNNKE. Over 1-36 the chain is Cytoplasmic; sequence MSYLPLYNNNNNINNNNNNNNNRINNNKEKGVKNKP. The span at 8–25 shows a compositional bias: low complexity; sequence NNNNNINNNNNNNNNRIN. The helical; Signal-anchor for type II membrane protein transmembrane segment at 37-57 threads the bilayer; the sequence is FQIFISIVFIVFLCFFLIWSM. Topologically, residues 58–550 are extracellular; that stretch reads EAKKDKNIKI…LFNEPLTNEC (493 aa). Residues 81 to 97 show a composition bias toward low complexity; it reads LINEPINNNKNNKNNIP. The segment at 81 to 100 is disordered; that stretch reads LINEPINNNKNNKNNIPKNH. Asn-233, Asn-322, and Asn-426 each carry an N-linked (GlcNAc...) asparagine glycan.

This sequence belongs to the glycosyltransferase 8 family. Highly divergent.

It localises to the membrane. The sequence is that of Glycosyltransferase-like protein gnt12 (gnt12) from Dictyostelium discoideum (Social amoeba).